Reading from the N-terminus, the 426-residue chain is Egl nine homolog 1 (426 aa).

Alanine 2 carries the N-acetylalanine modification. A required for nuclear export region spans residues 6-20 (GGPGGPSPSERDRQY). Residue serine 12 is modified to Phosphoserine. Zn(2+) is bound by residues cysteine 21, cysteine 24, cysteine 33, cysteine 36, cysteine 42, histidine 46, histidine 54, and cysteine 58. The segment at 21-58 (CELCGKMENLLRCSRCRSSFYCCKEHQRQDWKKHKLVC) adopts an MYND-type; atypical zinc-finger fold. 2 disordered regions span residues 65-129 (LGHG…PCRA) and 160-184 (ANLY…PNGQ). Residues 77–87 (PAPPAAVPPPR) are compositionally biased toward pro residues. Positions 89-103 (GAREPRKAAARRDNA) are enriched in basic and acidic residues. Residues 120 to 129 (PAAAASPCRA) show a composition bias toward low complexity. At serine 125 the chain carries Phosphoserine. 2 positions are modified to S-nitrosocysteine: cysteine 201 and cysteine 208. The beta(2)beta(3) 'finger-like' loop stretch occupies residues 241–251 (VSQKSDSSKDI). A Fe2OG dioxygenase domain is found at 291 to 392 (KINGRTKAMV…RYAITVWYFD (102 aa)). S-nitrosocysteine is present on cysteine 302. Fe cation is bound by residues histidine 313 and aspartate 315. S-nitrosocysteine is present on residues cysteine 323 and cysteine 326. Histidine 374 contributes to the Fe cation binding site. Arginine 383 serves as a coordination point for 2-oxoglutarate.

Monomer. Interacts with ING4; the interaction inhibits the hydroxylation of HIF alpha proteins. Interacts with PTGES3 (via PXLE motif); thereby recruiting EGLN1 to the HSP90 pathway to facilitate HIF alpha proteins hydroxylation. Interacts with LIMD1. Found in a complex composed of LIMD1, VHL, EGLN1/PHD2, ELOB and CUL2. Interacts with EPAS1. Interacts with CBFA2T3. Interacts with HIF1A. Fe(2+) is required as a cofactor. L-ascorbate serves as cofactor. Post-translationally, S-nitrosylation inhibits the enzyme activity up to 60% under aerobic conditions. Chelation of Fe(2+) has no effect on the S-nitrosylation. It is uncertain whether nitrosylation occurs on Cys-323 or Cys-326. According to PubMed:11056053, widely expressed with highest levels in skeletal muscle and heart, moderate levels in pancreas, brain (dopaminergic neurons of adult and fetal substantia nigra) and kidney, and lower levels in lung and liver. According to PubMed:12351678 widely expressed with highest levels in brain, kidney and adrenal gland. Expressed in cardiac myocytes, aortic endothelial cells and coronary artery smooth muscle. According to PubMed:12788921; expressed in adult and fetal heart, brain, liver, lung, skeletal muscle and kidney. Also expressed in placenta. Highest levels in adult heart, brain, lung and liver and fetal brain, heart spleen and skeletal muscle.

Its subcellular location is the cytoplasm. It localises to the nucleus. The enzyme catalyses L-prolyl-[hypoxia-inducible factor alpha subunit] + 2-oxoglutarate + O2 = trans-4-hydroxy-L-prolyl-[hypoxia-inducible factor alpha subunit] + succinate + CO2. Its activity is regulated as follows. Following exposure to hypoxia, activated in HeLa cells but not in cardiovascular cells. Cellular oxygen sensor that catalyzes, under normoxic conditions, the post-translational formation of 4-hydroxyproline in hypoxia-inducible factor (HIF) alpha proteins. Hydroxylates a specific proline found in each of the oxygen-dependent degradation (ODD) domains (N-terminal, NODD, and C-terminal, CODD) of HIF1A. Also hydroxylates HIF2A. Has a preference for the CODD site for both HIF1A and HIF1B. Hydroxylated HIFs are then targeted for proteasomal degradation via the von Hippel-Lindau ubiquitination complex. Under hypoxic conditions, the hydroxylation reaction is attenuated allowing HIFs to escape degradation resulting in their translocation to the nucleus, heterodimerization with HIF1B, and increased expression of hypoxy-inducible genes. EGLN1 is the most important isozyme under normoxia and, through regulating the stability of HIF1, involved in various hypoxia-influenced processes such as angiogenesis in retinal and cardiac functionality. Target proteins are preferentially recognized via a LXXLAP motif. This is Egl nine homolog 1 from Homo sapiens (Human).